Here is a 140-residue protein sequence, read N- to C-terminus: Cystatin-like 1 (140 aa).

An N-terminal signal peptide occupies residues 1–23 (MEMKARGLRIPLLLLLVTVVVMA). Residues 32–126 (GGFKEKAMSK…CKSLIYSVPW (95 aa)) form the Cystatin domain. The N-linked (GlcNAc...) asparagine glycan is linked to N45. 2 cysteine pairs are disulfide-bonded: C94-C104 and C117-C137.

The protein belongs to the cystatin family. In terms of tissue distribution, highly expressed in testis where it localizes to spermatogonium, spermatocyes and round spermatids. Not detected in spermatozoa. Also detected in epididymis, cerebrum and pituitary.

The protein localises to the secreted. The chain is Cystatin-like 1 from Mus musculus (Mouse).